The chain runs to 154 residues: C-type lectin 16 (154 aa).

Residues 1–20 form the signal peptide; sequence MALSLYLIAVICSLVGFTAS. The C-type lectin domain maps to 27–152; that stretch reads DNRFCFPNVV…CASMRRFVCE (126 aa). 2 disulfide bridges follow: cysteine 46/cysteine 151 and cysteine 123/cysteine 143.

In terms of assembly, (Microbial infection) Interacts with non-structural protein 1 of dengue virus type 2. Interacts with envelope protein E of dengue virus type 2. Female salivary gland (at protein level). Not detected in female carcass without salivary glands (at protein level). Not detected in male tissues (at protein level).

It is found in the secreted. Its function is as follows. Putative lectin. May have a regulatory role in mosquito immunity. Probably suppresses replication of dengue virus type 2 in mosquito salivary glands. This chain is C-type lectin 16, found in Aedes aegypti (Yellowfever mosquito).